Here is a 152-residue protein sequence, read N- to C-terminus: MSFDLATCRQSALQLLSRRDHSEYELHQKLALKGHPTEVIDEVVKYVLELGYLSDARYAASQARQIVHKGYGEQRLRQQLKEKRVAEEVIEQALAEQTIDWFELAKEVAHKKFKSGISHERSQYAKQVRYLQYRGFNFEQIRYALQASESDE.

The protein belongs to the RecX family.

Its subcellular location is the cytoplasm. Its function is as follows. Modulates RecA activity. This chain is Regulatory protein RecX, found in Vibrio cholerae serotype O1 (strain ATCC 39541 / Classical Ogawa 395 / O395).